The following is a 204-amino-acid chain: NAD(P)H dehydrogenase (quinone) (204 aa).

A Flavodoxin-like domain is found at 4 to 195; sequence IQIVFYSMYG…AIARFQGAHV (192 aa). FMN is bound by residues 10 to 15 and 83 to 85; these read SMYGHI and TRF. Tyr12 serves as a coordination point for NAD(+). Trp103 serves as a coordination point for substrate. FMN is bound by residues 118-124 and His139; that span reads STATQHG.

This sequence belongs to the WrbA family. The cofactor is FMN.

The catalysed reaction is a quinone + NADH + H(+) = a quinol + NAD(+). The enzyme catalyses a quinone + NADPH + H(+) = a quinol + NADP(+). The chain is NAD(P)H dehydrogenase (quinone) from Trichlorobacter lovleyi (strain ATCC BAA-1151 / DSM 17278 / SZ) (Geobacter lovleyi).